Reading from the N-terminus, the 564-residue chain is Septation ring formation regulator EzrA (564 aa).

Over 1–4 the chain is Extracellular; that stretch reads MVLY. The chain crosses the membrane as a helical span at residues 5–23; that stretch reads IILAIIVIILIAVGVLFYL. The Cytoplasmic portion of the chain corresponds to 24–564; the sequence is RSNKRQIIEK…KHIEEEVIKQ (541 aa). Coiled-coil stretches lie at residues 99–138, 190–223, 271–300, 350–435, and 471–550; these read SFNA…YKDN, DGNY…LIRE, LISR…LIEH, VRQF…RRLL, and VKQL…ESVE.

Belongs to the EzrA family.

It localises to the cell membrane. Negative regulator of FtsZ ring formation; modulates the frequency and position of FtsZ ring formation. Inhibits FtsZ ring formation at polar sites. Interacts either with FtsZ or with one of its binding partners to promote depolymerization. The chain is Septation ring formation regulator EzrA from Staphylococcus aureus (strain NCTC 8325 / PS 47).